The primary structure comprises 434 residues: MYDRLKGFRDFYPPEMTARRQVIDILETTATQYGFREVGTPTLEQTQMYVDKSGEGIEEELYAFSDDGGRDVTLIPELTPTVARMVVDKQQALSKPIKWVSTRPFWRYEQVQQGRFREFYQTNVDIFGTADPIADAEILAFAADALRNLGLTASDFEFRVSHRDILSGLLASITNDDADIDTRAAIRAVDKRAKIEQAEYHGLLTDAGLSYDQAQSFDDLLTTADLDEIATVGNDIVTTAVQNLRSVLAAVDDLGVGEFCDISLTTARGLDYYTGVVFECFDATGEVSRSVFGGGRYDNLIESFGGQPTPAVGVAPGLAPLSLLCQRAGVWPTEELTTDYYILTVGDTRSVATRIARELRVNKNTVEIDIADRSFGAQMGYADSINAETVIIVGERDLENDEITIKDMNSGDQTTVPVEAFPGDHDAPTYEDVV.

The segment at 412–434 (DQTTVPVEAFPGDHDAPTYEDVV) is disordered.

It belongs to the class-II aminoacyl-tRNA synthetase family.

Its subcellular location is the cytoplasm. It catalyses the reaction tRNA(His) + L-histidine + ATP = L-histidyl-tRNA(His) + AMP + diphosphate + H(+). This chain is Histidine--tRNA ligase, found in Haloquadratum walsbyi (strain DSM 16790 / HBSQ001).